A 949-amino-acid chain; its full sequence is Protocadherin alpha-11 (949 aa).

The signal sequence occupies residues M1–G29. 6 consecutive Cadherin domains span residues Q30–F133, A157–F242, D243–V349, A350–F454, A455–L564, and V580–A677. Residues Q30–N696 lie on the Extracellular side of the membrane. N-linked (GlcNAc...) asparagine glycosylation is found at N265 and N304. N547 is a glycosylation site (N-linked (GlcNAc...) asparagine). The chain crosses the membrane as a helical span at residues V697–Y717. Over T718–Q949 the chain is Cytoplasmic. PXXP repeat units follow at residues P733–P736 and P773–P776. Residues P733 to P893 are 6 X 4 AA repeats of P-X-X-P. Disordered stretches follow at residues R753–Y807, I826–G858, and Y870–I889. The segment covering N780–E789 has biased composition (basic and acidic residues). 4 PXXP repeats span residues P795–P798, P831–P834, P872–P875, and P890–P893. Residues Q900–Q949 form a disordered region. Residues D908–K922 are compositionally biased toward basic and acidic residues.

It localises to the cell membrane. Potential calcium-dependent cell-adhesion protein. May be involved in the establishment and maintenance of specific neuronal connections in the brain. The sequence is that of Protocadherin alpha-11 (PCDHA11) from Pan troglodytes (Chimpanzee).